The chain runs to 255 residues: Thiazole synthase (255 aa).

Lys-95 functions as the Schiff-base intermediate with DXP in the catalytic mechanism. 1-deoxy-D-xylulose 5-phosphate is bound by residues Gly-156, 182–183 (AG), and 204–205 (NT).

Belongs to the ThiG family. As to quaternary structure, homotetramer. Forms heterodimers with either ThiH or ThiS.

It is found in the cytoplasm. It carries out the reaction [ThiS sulfur-carrier protein]-C-terminal-Gly-aminoethanethioate + 2-iminoacetate + 1-deoxy-D-xylulose 5-phosphate = [ThiS sulfur-carrier protein]-C-terminal Gly-Gly + 2-[(2R,5Z)-2-carboxy-4-methylthiazol-5(2H)-ylidene]ethyl phosphate + 2 H2O + H(+). It functions in the pathway cofactor biosynthesis; thiamine diphosphate biosynthesis. Functionally, catalyzes the rearrangement of 1-deoxy-D-xylulose 5-phosphate (DXP) to produce the thiazole phosphate moiety of thiamine. Sulfur is provided by the thiocarboxylate moiety of the carrier protein ThiS. In vitro, sulfur can be provided by H(2)S. This is Thiazole synthase from Vibrio parahaemolyticus serotype O3:K6 (strain RIMD 2210633).